A 282-amino-acid polypeptide reads, in one-letter code: ABC transporter I family member 21 (282 aa).

One can recognise an ABC transporter domain in the interval 13–248; the sequence is IRVSGMQFSY…KTSPNLLSVV (236 aa). Residue 46 to 53 coordinates ATP; sequence GANGSGKT.

Belongs to the ABC transporter superfamily. ABCI family. In terms of tissue distribution, expressed in root elongating zone and root meristem, as well as in elongating etiolated hypocotyls.

The protein localises to the cytoplasm. In Arabidopsis thaliana (Mouse-ear cress), this protein is ABC transporter I family member 21 (ABCI21).